The sequence spans 319 residues: Ninja-family protein Os07g0602900 (319 aa).

3 disordered regions span residues 1-26, 69-152, and 181-234; these read MAAS…EKGG, LPGG…DAMY, and AEAM…LTMR. A compositionally biased stretch (gly residues) spans 70 to 79; it reads PGGGGGGAGG. Residues 105–118 are compositionally biased toward basic and acidic residues; that stretch reads ERWRRREMQSLKRL. The span at 185–196 shows a compositional bias: polar residues; that stretch reads DTSSSDNASCQN. Over residues 225–234 the composition is skewed to low complexity; the sequence is LRTLRSLTMR.

Belongs to the Ninja family.

Its subcellular location is the nucleus. This Oryza sativa subsp. japonica (Rice) protein is Ninja-family protein Os07g0602900.